The chain runs to 224 residues: MKGLIGKKIGMTQVFNDEGNLVPVTVIDVGTCQVVGKRTPEKDNYSAVTIGFGEIREKILNLAERGFFKKANAPYRRHLKEFRVTPEEAASFNVGDAVKADMFAKGELVDVTGITKGRGFSGVMRRWNFKGSQTKTHGTHEYQRHPGAIGQRKTPGRVYPNKKMPGHYGVDQVTTQNLTVVDVDVEKGLVLVKGAVAGHNNGVVYIRPSIKAAMRAQHKAARGA.

The interval 132–153 (SQTKTHGTHEYQRHPGAIGQRK) is disordered.

The protein belongs to the universal ribosomal protein uL3 family. In terms of assembly, part of the 50S ribosomal subunit. Forms a cluster with proteins L14 and L19.

Its function is as follows. One of the primary rRNA binding proteins, it binds directly near the 3'-end of the 23S rRNA, where it nucleates assembly of the 50S subunit. The protein is Large ribosomal subunit protein uL3 of Myxococcus xanthus (strain DK1622).